Reading from the N-terminus, the 549-residue chain is Membrane protein insertase YidC (549 aa).

The helical transmembrane segment at 9–29 (LRLILAIALSFLFIALYSYFF) threads the bilayer. Over residues 37-51 (TETTKQETTNNHTAT) the composition is skewed to low complexity. The interval 37–56 (TETTKQETTNNHTATSPTAS) is disordered. Transmembrane regions (helical) follow at residues 328-348 (VIEY…LDYL), 351-371 (FVGN…IILY), 417-437 (GANP…FFAI), 452-472 (WVLW…PLLM), and 498-518 (LLPL…VLYW).

This sequence belongs to the OXA1/ALB3/YidC family. Type 1 subfamily. As to quaternary structure, interacts with the Sec translocase complex via SecD. Specifically interacts with transmembrane segments of nascent integral membrane proteins during membrane integration.

It is found in the cell inner membrane. Required for the insertion and/or proper folding and/or complex formation of integral membrane proteins into the membrane. Involved in integration of membrane proteins that insert both dependently and independently of the Sec translocase complex, as well as at least some lipoproteins. Aids folding of multispanning membrane proteins. The sequence is that of Membrane protein insertase YidC from Helicobacter pylori (strain J99 / ATCC 700824) (Campylobacter pylori J99).